Consider the following 465-residue polypeptide: Spermidine/putrescine import ATP-binding protein PotA (465 aa).

Residues 1 to 18 are compositionally biased toward polar residues; it reads MTATSGARTSDARTSGAR. The tract at residues 1–21 is disordered; sequence MTATSGARTSDARTSGARTSD. In terms of domain architecture, ABC transporter spans 30 to 264; it reads IELVGVAKDY…PRTRFVAGFI (235 aa). 66 to 73 is an ATP binding site; that stretch reads GPSGCGKS.

The protein belongs to the ABC transporter superfamily. Spermidine/putrescine importer (TC 3.A.1.11.1) family. As to quaternary structure, the complex is composed of two ATP-binding proteins (PotA), two transmembrane proteins (PotB and PotC) and a solute-binding protein (PotD).

Its subcellular location is the cell membrane. It carries out the reaction ATP + H2O + polyamine-[polyamine-binding protein]Side 1 = ADP + phosphate + polyamineSide 2 + [polyamine-binding protein]Side 1.. Functionally, part of the ABC transporter complex PotABCD involved in spermidine/putrescine import. Responsible for energy coupling to the transport system. This is Spermidine/putrescine import ATP-binding protein PotA from Frankia alni (strain DSM 45986 / CECT 9034 / ACN14a).